Consider the following 974-residue polypeptide: Zinc finger protein 280D (974 aa).

Residues Lys-44, Lys-46, Lys-86, Lys-99, Lys-138, Lys-201, Lys-222, Lys-245, Lys-287, and Lys-304 each participate in a glycyl lysine isopeptide (Lys-Gly) (interchain with G-Cter in SUMO2) cross-link. Residues 188-216 (KRPSGSDISSVNPKKPKPSENTSGIDASS) are disordered. 2 consecutive C2H2-type zinc fingers follow at residues 333–355 (FKCFSCLKVLKNNIRFMNHMKHH) and 370–393 (TTCQHCYRQFPTPFQLQCHIESTH). The C2H2-type 3; degenerate zinc finger occupies 400–424 (TICKICELSFETEQILLQHMKDNHK). 2 C2H2-type zinc fingers span residues 430-453 (YICQVCNYRSSLFSEVESHFRTSH) and 459-481 (LLCPFCLKVIKIATPYMHHYMKH). Disordered stretches follow at residues 507 to 624 (TQHH…KVNT), 751 to 797 (IKTE…EGTG), and 815 to 974 (VTVS…EERS). A compositionally biased stretch (low complexity) spans 539-557 (SGSSVTPSISPSTSTLQLS). The residue at position 557 (Ser-557) is a Phosphoserine. The segment covering 571–587 (KLTTSTPNTTISDPSKA) has biased composition (polar residues). The segment covering 591 to 611 (KSNGSKSKNKSKVSNMQKKQS) has biased composition (low complexity). The segment covering 612-624 (TLSSSNKKSKVNT) has biased composition (polar residues). Residue Lys-752 forms a Glycyl lysine isopeptide (Lys-Gly) (interchain with G-Cter in SUMO2) linkage. Over residues 763-775 (VSKETARHSRAEG) the composition is skewed to basic and acidic residues. Residues 817-829 (VSDTENVSSSKNI) are compositionally biased toward polar residues. Residues 830–860 (LSHDPDVGTDTMEKEEKTHHACQEMELKVDQ) are compositionally biased toward basic and acidic residues. Residues 861-884 (SSESTNPTEAELSSETRQGLQLTS) are compositionally biased toward polar residues. Phosphoserine is present on residues Ser-904 and Ser-907. Positions 938-950 (SANTSDTVSDQTG) are enriched in polar residues.

It localises to the nucleus. In terms of biological role, may function as a transcription factor. This is Zinc finger protein 280D (Znf280d) from Mus musculus (Mouse).